The chain runs to 549 residues: Chaperonin GroEL (549 aa).

ATP contacts are provided by residues Thr30–Pro33, Lys51, Asp87–Thr91, Gly415, and Asp497.

It belongs to the chaperonin (HSP60) family. As to quaternary structure, forms a cylinder of 14 subunits composed of two heptameric rings stacked back-to-back. Interacts with the co-chaperonin GroES.

The protein localises to the cytoplasm. It carries out the reaction ATP + H2O + a folded polypeptide = ADP + phosphate + an unfolded polypeptide.. In terms of biological role, together with its co-chaperonin GroES, plays an essential role in assisting protein folding. The GroEL-GroES system forms a nano-cage that allows encapsulation of the non-native substrate proteins and provides a physical environment optimized to promote and accelerate protein folding. The protein is Chaperonin GroEL of Pectobacterium atrosepticum (strain SCRI 1043 / ATCC BAA-672) (Erwinia carotovora subsp. atroseptica).